A 319-amino-acid polypeptide reads, in one-letter code: Acetyl-coenzyme A carboxylase carboxyl transferase subunit alpha (319 aa).

The 254-residue stretch at L43–E296 folds into the CoA carboxyltransferase C-terminal domain.

The protein belongs to the AccA family. In terms of assembly, acetyl-CoA carboxylase is a heterohexamer composed of biotin carboxyl carrier protein (AccB), biotin carboxylase (AccC) and two subunits each of ACCase subunit alpha (AccA) and ACCase subunit beta (AccD).

The protein resides in the cytoplasm. It catalyses the reaction N(6)-carboxybiotinyl-L-lysyl-[protein] + acetyl-CoA = N(6)-biotinyl-L-lysyl-[protein] + malonyl-CoA. The protein operates within lipid metabolism; malonyl-CoA biosynthesis; malonyl-CoA from acetyl-CoA: step 1/1. Its function is as follows. Component of the acetyl coenzyme A carboxylase (ACC) complex. First, biotin carboxylase catalyzes the carboxylation of biotin on its carrier protein (BCCP) and then the CO(2) group is transferred by the carboxyltransferase to acetyl-CoA to form malonyl-CoA. The polypeptide is Acetyl-coenzyme A carboxylase carboxyl transferase subunit alpha (Baumannia cicadellinicola subsp. Homalodisca coagulata).